A 269-amino-acid polypeptide reads, in one-letter code: Putative biopolymer transport protein ExbD (269 aa).

Topologically, residues 1–40 are cytoplasmic; it reads MASSPKAPKSHRKFQSIYHPTRPLSLWQDNQHDQGEVRIE. The chain crosses the membrane as a helical span at residues 41 to 61; sequence IIPLIDVVFCILTFFILGAVG. The Periplasmic segment spans residues 62 to 269; that stretch reads LSRQQAISLD…GNTVPSAPQQ (208 aa). The disordered stretch occupies residues 190–269; sequence NGANPGMSNF…GNTVPSAPQQ (80 aa). Residues 193–204 show a composition bias toward low complexity; sequence NPGMSNFNNSNP.

This sequence belongs to the ExbD/TolR family.

The protein resides in the cell inner membrane. The polypeptide is Putative biopolymer transport protein ExbD (Synechocystis sp. (strain ATCC 27184 / PCC 6803 / Kazusa)).